A 360-amino-acid chain; its full sequence is 3-isopropylmalate dehydrogenase (360 aa).

Residue 76-89 (GPKWDTIERDIRPE) coordinates NAD(+). Positions 96, 106, 134, and 224 each coordinate substrate. Mg(2+) is bound by residues D224, D248, and D252. An NAD(+)-binding site is contributed by 282-294 (GSAPDIAGQGIAN).

This sequence belongs to the isocitrate and isopropylmalate dehydrogenases family. LeuB type 1 subfamily. Homodimer. It depends on Mg(2+) as a cofactor. Requires Mn(2+) as cofactor.

It is found in the cytoplasm. It carries out the reaction (2R,3S)-3-isopropylmalate + NAD(+) = 4-methyl-2-oxopentanoate + CO2 + NADH. It participates in amino-acid biosynthesis; L-leucine biosynthesis; L-leucine from 3-methyl-2-oxobutanoate: step 3/4. In terms of biological role, catalyzes the oxidation of 3-carboxy-2-hydroxy-4-methylpentanoate (3-isopropylmalate) to 3-carboxy-4-methyl-2-oxopentanoate. The product decarboxylates to 4-methyl-2 oxopentanoate. The chain is 3-isopropylmalate dehydrogenase from Pseudomonas syringae pv. tomato (strain ATCC BAA-871 / DC3000).